The following is a 97-amino-acid chain: Large ribosomal subunit protein bL28 (97 aa).

Belongs to the bacterial ribosomal protein bL28 family.

The protein is Large ribosomal subunit protein bL28 of Brucella abortus (strain S19).